A 101-amino-acid polypeptide reads, in one-letter code: Small ribosomal subunit protein uS14 (101 aa).

The disordered stretch occupies residues 53-72 (RDAAAVRVRNRDSHDGRPRG). The segment covering 61 to 70 (RNRDSHDGRP) has biased composition (basic and acidic residues).

The protein belongs to the universal ribosomal protein uS14 family. In terms of assembly, part of the 30S ribosomal subunit. Contacts proteins S3 and S10.

In terms of biological role, binds 16S rRNA, required for the assembly of 30S particles and may also be responsible for determining the conformation of the 16S rRNA at the A site. The protein is Small ribosomal subunit protein uS14 of Corynebacterium glutamicum (strain R).